Consider the following 446-residue polypeptide: Trigger factor (446 aa).

The region spanning 182 to 267 is the PPIase FKBP-type domain; the sequence is GDKVVVDYQN…VKNIFMMKAI (86 aa).

Belongs to the FKBP-type PPIase family. Tig subfamily.

It localises to the cytoplasm. It catalyses the reaction [protein]-peptidylproline (omega=180) = [protein]-peptidylproline (omega=0). In terms of biological role, involved in protein export. Acts as a chaperone by maintaining the newly synthesized protein in an open conformation. Functions as a peptidyl-prolyl cis-trans isomerase. The chain is Trigger factor from Ehrlichia ruminantium (strain Gardel).